Consider the following 183-residue polypeptide: Ribosome rescue factor SmrB (183 aa).

In terms of domain architecture, Smr spans 98–173; sequence LDLHGLTQLQ…GDAALLVLIE (76 aa).

This sequence belongs to the SmrB family. Associates with collided ribosomes, but not with correctly translating polysomes.

Its function is as follows. Acts as a ribosome collision sensor. Detects stalled/collided disomes (pairs of ribosomes where the leading ribosome is stalled and a second ribosome has collided with it) and endonucleolytically cleaves mRNA at the 5' boundary of the stalled ribosome. Stalled/collided disomes form a new interface (primarily via the 30S subunits) that binds SmrB. Cleaved mRNA becomes available for tmRNA ligation, leading to ribosomal subunit dissociation and rescue of stalled ribosomes. This Salmonella arizonae (strain ATCC BAA-731 / CDC346-86 / RSK2980) protein is Ribosome rescue factor SmrB.